We begin with the raw amino-acid sequence, 179 residues long: Large ribosomal subunit protein uL5 (179 aa).

Belongs to the universal ribosomal protein uL5 family. Part of the 50S ribosomal subunit; part of the 5S rRNA/L5/L18/L25 subcomplex. Contacts the 5S rRNA and the P site tRNA. Forms a bridge to the 30S subunit in the 70S ribosome.

Its function is as follows. This is one of the proteins that bind and probably mediate the attachment of the 5S RNA into the large ribosomal subunit, where it forms part of the central protuberance. In the 70S ribosome it contacts protein S13 of the 30S subunit (bridge B1b), connecting the 2 subunits; this bridge is implicated in subunit movement. Contacts the P site tRNA; the 5S rRNA and some of its associated proteins might help stabilize positioning of ribosome-bound tRNAs. This chain is Large ribosomal subunit protein uL5, found in Nitrosomonas eutropha (strain DSM 101675 / C91 / Nm57).